A 676-amino-acid polypeptide reads, in one-letter code: tRNA 5-methylaminomethyl-2-thiouridine biosynthesis bifunctional protein MnmC (676 aa).

The segment at 1-241 (MFTVTPAKIY…KRECLCGIKN (241 aa)) is tRNA (mnm(5)s(2)U34)-methyltransferase. The segment at 268 to 676 (IGGGIASLFT…RKLLKGTEIK (409 aa)) is FAD-dependent cmnm(5)s(2)U34 oxidoreductase.

It in the N-terminal section; belongs to the methyltransferase superfamily. tRNA (mnm(5)s(2)U34)-methyltransferase family. The protein in the C-terminal section; belongs to the DAO family. Requires FAD as cofactor.

It localises to the cytoplasm. It catalyses the reaction 5-aminomethyl-2-thiouridine(34) in tRNA + S-adenosyl-L-methionine = 5-methylaminomethyl-2-thiouridine(34) in tRNA + S-adenosyl-L-homocysteine + H(+). Catalyzes the last two steps in the biosynthesis of 5-methylaminomethyl-2-thiouridine (mnm(5)s(2)U) at the wobble position (U34) in tRNA. Catalyzes the FAD-dependent demodification of cmnm(5)s(2)U34 to nm(5)s(2)U34, followed by the transfer of a methyl group from S-adenosyl-L-methionine to nm(5)s(2)U34, to form mnm(5)s(2)U34. This chain is tRNA 5-methylaminomethyl-2-thiouridine biosynthesis bifunctional protein MnmC, found in Histophilus somni (strain 2336) (Haemophilus somnus).